The primary structure comprises 257 residues: 3-oxo-5-alpha-steroid 4-dehydrogenase 1 (257 aa).

6 helical membrane passes run 7–27, 50–70, 84–104, 109–129, 149–169, and 208–228; these read FLLDALAYLECALGVVCYVLL, AAWTVQELPSLALPLLACAGA, ILLAMFLVHYAQRSLVFPFLI, PMPLYAFLLAFIFCTYNGYLQ, FLTGSALWLIGMLINIHSDHV, and ALASWSIQGWAFAVFTFCVLF.

Belongs to the steroid 5-alpha reductase family.

Its subcellular location is the microsome membrane. It localises to the endoplasmic reticulum membrane. The catalysed reaction is a 3-oxo-5alpha-steroid + NADP(+) = a 3-oxo-Delta(4)-steroid + NADPH + H(+). It carries out the reaction 5alpha-pregnane-3,20-dione + NADP(+) = progesterone + NADPH + H(+). The enzyme catalyses 17beta-hydroxy-5alpha-androstan-3-one + NADP(+) = testosterone + NADPH + H(+). It catalyses the reaction androst-4-ene-3,17-dione + NADPH + H(+) = 5alpha-androstan-3,17-dione + NADP(+). Functionally, converts testosterone into 5-alpha-dihydrotestosterone and progesterone or corticosterone into their corresponding 5-alpha-3-oxosteroids. It plays a central role in sexual differentiation and androgen physiology. The sequence is that of 3-oxo-5-alpha-steroid 4-dehydrogenase 1 (SRD5A1) from Bos taurus (Bovine).